The following is a 384-amino-acid chain: Fructose-1,6-bisphosphate aldolase/phosphatase (384 aa).

The active-site Proton acceptor; for FBP phosphatase activity is Asp11. Mg(2+) is bound by residues Asp11, His18, Asp52, and Asp53. Residue His18 participates in beta-D-fructose 1,6-bisphosphate binding. His18 serves as a coordination point for dihydroxyacetone phosphate. Tyr90 lines the beta-D-fructose 1,6-bisphosphate pocket. Residue Gln94 participates in Mg(2+) binding. Gly103–Asn104 is a beta-D-fructose 1,6-bisphosphate binding site. Asp131 is a Mg(2+) binding site. Lys132 contacts beta-D-fructose 1,6-bisphosphate. Lys132 is a binding site for dihydroxyacetone phosphate. Tyr228 acts as the Proton donor/acceptor; for FBP aldolase activity in catalysis. Residues Lys231, Asp232, and Asp233 each contribute to the Mg(2+) site. The active-site Schiff-base intermediate with DHAP; for FBP aldolase activity is the Lys231. Beta-D-fructose 1,6-bisphosphate contacts are provided by residues Gln241–His242, Arg265, Asp286, and Tyr347. 2 residues coordinate dihydroxyacetone phosphate: Arg265 and Asp286.

Belongs to the FBP aldolase/phosphatase family. Homooctamer; dimer of tetramers. It depends on Mg(2+) as a cofactor.

It catalyses the reaction beta-D-fructose 1,6-bisphosphate + H2O = beta-D-fructose 6-phosphate + phosphate. The catalysed reaction is beta-D-fructose 1,6-bisphosphate = D-glyceraldehyde 3-phosphate + dihydroxyacetone phosphate. The protein operates within carbohydrate biosynthesis; gluconeogenesis. Catalyzes two subsequent steps in gluconeogenesis: the aldol condensation of dihydroxyacetone phosphate (DHAP) and glyceraldehyde-3-phosphate (GA3P) to fructose-1,6-bisphosphate (FBP), and the dephosphorylation of FBP to fructose-6-phosphate (F6P). This Sulfurisphaera tokodaii (strain DSM 16993 / JCM 10545 / NBRC 100140 / 7) (Sulfolobus tokodaii) protein is Fructose-1,6-bisphosphate aldolase/phosphatase.